Consider the following 338-residue polypeptide: Inorganic pyrophosphatase (338 aa).

Residue arginine 129 participates in diphosphate binding. 3 residues coordinate Mg(2+): aspartate 166, aspartate 171, and aspartate 203.

Belongs to the PPase family. As to quaternary structure, component of the NURF complex composed of Caf1-55, E(bx), Nurf-38 and Iswi. Requires Mg(2+) as cofactor.

Its subcellular location is the cytoplasm. The protein localises to the nucleus. It carries out the reaction diphosphate + H2O = 2 phosphate + H(+). Component of NURF (nucleosome remodeling factor), a complex which catalyzes ATP-dependent nucleosome sliding and facilitates transcription of chromatin. NURF is required for homeotic gene expression, proper larval blood cell development, normal male X chromosome morphology, ecdysteroid signaling and metamorphosis. Inorganic pyrophosphatase (PPase), hydrolyzes inorganic pyrophosphate to inorganic phosphate, essential for driving critical biosynthetic reactions including transcription, replication, and DNA repair. In Drosophila melanogaster (Fruit fly), this protein is Inorganic pyrophosphatase (Nurf-38).